A 143-amino-acid polypeptide reads, in one-letter code: Transcriptional regulator MraZ (143 aa).

2 consecutive SpoVT-AbrB domains span residues 5 to 47 (EYEH…PMPV) and 76 to 119 (ASDL…SAER).

Belongs to the MraZ family. Forms oligomers.

Its subcellular location is the cytoplasm. The protein localises to the nucleoid. The chain is Transcriptional regulator MraZ from Herpetosiphon aurantiacus (strain ATCC 23779 / DSM 785 / 114-95).